Here is a 614-residue protein sequence, read N- to C-terminus: uncharacterized protein (614 aa).

2 helical membrane-spanning segments follow: residues 494-516 (VAYW…GSTL) and 552-574 (LLIG…IVHA). The segment at 588–614 (AVRPRADKDIQTLTHRDEAEEDQEEDS) is disordered. Residues 591–605 (PRADKDIQTLTHRDE) show a composition bias toward basic and acidic residues.

It is found in the cell membrane. This is an uncharacterized protein from Treponema pallidum (strain Nichols).